The primary structure comprises 381 residues: (S)-scoulerine 9-O-methyltransferase (381 aa).

S-adenosyl-L-methionine-binding residues include glycine 223, glutamate 246, aspartate 266, methionine 267, and lysine 280. The Proton acceptor role is filled by histidine 284.

The protein belongs to the class I-like SAM-binding methyltransferase superfamily. Cation-independent O-methyltransferase family. COMT subfamily.

It carries out the reaction (S)-scoulerine + S-adenosyl-L-methionine = (S)-tetrahydrocolumbamine + S-adenosyl-L-homocysteine + H(+). Its function is as follows. Produces a precursor of protoberberine alkaloids. This chain is (S)-scoulerine 9-O-methyltransferase (SMT), found in Coptis japonica (Japanese goldthread).